The chain runs to 199 residues: Recombination protein RecR (199 aa).

Residues 57-72 form a C4-type zinc finger; it reads CQSCRTYTEETLCPIC. A Toprim domain is found at 81-176; the sequence is STICVVETPA…MISRIAHGVP (96 aa).

The protein belongs to the RecR family.

In terms of biological role, may play a role in DNA repair. It seems to be involved in an RecBC-independent recombinational process of DNA repair. It may act with RecF and RecO. The chain is Recombination protein RecR from Shewanella putrefaciens (strain CN-32 / ATCC BAA-453).